A 37-amino-acid chain; its full sequence is Large ribosomal subunit protein bL36 (37 aa).

This sequence belongs to the bacterial ribosomal protein bL36 family.

The polypeptide is Large ribosomal subunit protein bL36 (Prochlorococcus marinus (strain MIT 9313)).